The sequence spans 5762 residues: Mucin-5B (5762 aa).

The N-terminal stretch at 1–25 (MGAPSACRTLVLALAAMLVVPQAET) is a signal peptide. The disordered stretch occupies residues 27–50 (GPVEPSWENAGHTMDGGAPTSSPT). In terms of domain architecture, VWFD 1 spans 75-245 (RVCSTWGDFH…KLDGPTEQCP (171 aa)). Intrachain disulfides connect Cys77–Cys207 and Cys99–Cys244. A glycan (N-linked (GlcNAc...) asparagine) is linked at Asn145. A Cu(2+)-binding site is contributed by Glu194. Residues Asn201 and Asn254 are each glycosylated (N-linked (GlcNAc...) asparagine). Cu(2+)-binding residues include His311 and His358. In terms of domain architecture, TIL 1 spans 329 to 385 (CPLNMQHQECGSPCTDTCSNPQRAQLCEDHCVDGCFCPPGTVLDDITHSGCLPLGQC). Residue Asn401 is glycosylated (N-linked (GlcNAc...) asparagine). A VWFD 2 domain is found at 423–598 (GTCSVQGGAH…NTWKAQAACA (176 aa)). Cystine bridges form between Cys425/Cys562, Cys447/Cys597, and Cys469/Cys477. N-linked (GlcNAc...) asparagine glycosylation is present at Asn515. TIL domains follow at residues 695–752 (CPKS…AQEC) and 805–855 (NSSA…EEDC). Asn805 carries an N-linked (GlcNAc...) asparagine glycan. Residues 855 to 927 (CPCVHNEATY…EYILAQDYCG (73 aa)) form the VWFC 1 domain. Residues 893–1062 (GTCVAYGDGH…NSWKLSPSCP (170 aa)) enclose the VWFD 3 domain. 4 cysteine pairs are disulfide-bonded: Cys895-Cys1026, Cys917-Cys1061, Cys926-Cys1023, and Cys944-Cys951. A glycan (N-linked (GlcNAc...) asparagine) is linked at Asn929. Residues Asn1276 and Asn1292 are each glycosylated (N-linked (GlcNAc...) asparagine). One copy of the Cys-rich subdomain 1 repeat lies at 1333–1432 (CVREVCRWSS…RVLCCEYVPC (100 aa)). The segment at 1333–4228 (CVREVCRWSS…RVFCCNYGHC (2896 aa)) is 7 X Cys-rich subdomain repeats. Trp1340 carries C-linked (Man) tryptophan glycosylation. 2 disordered regions span residues 1437 to 1462 (APGT…QTTA) and 1480 to 1502 (LTSQ…GTTT). The span at 1450-1462 (TEPAVPTPTQTTA) shows a compositional bias: low complexity. The Cys-rich subdomain 2 repeat unit spans residues 1503–1604 (CQPRCQWTEW…VLCCSDDHCR (102 aa)). C-linked (Man) tryptophan glycosylation occurs at Trp1509. A glycan (N-linked (GlcNAc...) asparagine) is linked at Asn1556. Positions 1607-1783 (ATTPPPTTEL…NTTTSQGTTR (177 aa)) are disordered. Residues 1614-1624 (TELETATTTTT) are compositionally biased toward low complexity. Composition is skewed to polar residues over residues 1625–1638 (QALF…SSPG) and 1645–1662 (ASTT…SPRY). A compositionally biased stretch (low complexity) spans 1663–1684 (TSTLGTATTGGPTTPAGSTEPT). Residues 1689–1706 (ATSTLPTRSALPGTTGSL) show a composition bias toward polar residues. Composition is skewed to low complexity over residues 1739 to 1756 (EPLT…LSTS) and 1765 to 1777 (TETT…NTTT). An N-linked (GlcNAc...) asparagine glycan is attached at Asn1774. A Cys-rich subdomain 3 repeat occupies 1784–1885 (CQPKCEWTEW…VLCCDDYSHC (102 aa)). Trp1790 is a glycosylation site (C-linked (Man) tryptophan). The segment covering 1890-1987 (ATSSTATPSS…TSVTPIPSSS (98 aa)) has biased composition (low complexity). 4 disordered regions span residues 1890-2019 (ATSS…TAHT), 2031-2100 (GATG…GTTH), 2114-2211 (TGSM…HTVR), and 2242-2302 (TGTT…SSPT). Residues 1890–2199 (ATSSTATPSS…VPNTMATTHG (310 aa)) form an 11 X approximate tandem repeats, Ser/Thr-rich region. Residues 1988 to 1997 (LGTTWTRLSQ) are compositionally biased toward polar residues. Residues 1998–2019 (TTTPTATMSTATPSSTPETAHT) are compositionally biased toward low complexity. Low complexity predominate over residues 2114–2181 (TGSMATPSSS…TSNTVTPSSA (68 aa)). Over residues 2182-2199 (LGTTHTPPVPNTMATTHG) the composition is skewed to polar residues. One copy of the Cys-rich subdomain 4 repeat lies at 2313–2414 (GCEPQCAWSE…RVFCCNYGHC (102 aa)). Trp2320 is a glycosylation site (C-linked (Man) tryptophan). Positions 2419-2756 (ATSSTAMPSS…VPNTTATTHG (338 aa)) are 11 X approximate tandem repeats, Ser/Thr-rich. Disordered stretches follow at residues 2443-2462 (ATTT…PGTT), 2473-2522 (TVTV…ATAL), and 2556-2861 (TTPT…PTSA). Low complexity predominate over residues 2556–2738 (TTPTATMSTA…TSSTVTPSSA (183 aa)). A compositionally biased stretch (polar residues) spans 2739–2786 (LGTTHTPPVPNTTATTHGRSLSPSSPHTVRTAWTSATSGTLGTTHITE). An N-linked (GlcNAc...) asparagine glycan is attached at Asn2749. Positions 2787–2861 (PSTGTSHTPA…TLLPSSPTSA (75 aa)) are enriched in low complexity. The stretch at 2854-2886 (LPSSPTSAPITTVVTMGCEPQCAWSEWLDYSYP) is one HAT 1 repeat. A Cys-rich subdomain 5 repeat occupies 2871–2971 (CEPQCAWSEW…RVFCCNYGHC (101 aa)). C-linked (Man) tryptophan glycosylation is present at Trp2877. The tract at residues 2976-3456 (ATSSTATPSS…VPNTTATTHG (481 aa)) is 17 X approximate tandem repeats, Ser/Thr-rich. Low complexity-rich tracts occupy residues 3001-3017 (TTTA…STPG) and 3026-3049 (TSTA…RTAT). Disordered stretches follow at residues 3001–3049 (TTTA…RTAT), 3256–3357 (TTPT…GTTH), 3371–3469 (TGSM…TVRT), and 3481–3561 (TTHI…PTSA). Low complexity predominate over residues 3371-3438 (TGSMATPSSS…TSSTVTPSSA (68 aa)). Over residues 3439 to 3456 (LGTTHTPPVPNTTATTHG) the composition is skewed to polar residues. The N-linked (GlcNAc...) asparagine glycan is linked to Asn3449. Positions 3487–3561 (PSTVTSHTPA…TLLPSSPTSA (75 aa)) are enriched in low complexity. The HAT 2 repeat unit spans residues 3554 to 3586 (LPSSPTSAPITTVVTTGCEPQCAWSEWLDYSYP). The Cys-rich subdomain 6 repeat unit spans residues 3571 to 3671 (CEPQCAWSEW…RVFCCNYGHC (101 aa)). Residue Trp3577 is glycosylated (C-linked (Man) tryptophan). The segment at 3676–4013 (ATSSTATPSS…VPNTTATTHG (338 aa)) is 11 X approximate tandem repeats, Ser/Thr-rich. 3 disordered regions span residues 3699 to 3779 (TATT…ATAL), 3813 to 3917 (TTPT…HTPT), and 3956 to 4118 (ATGS…PTSA). Over residues 3956–3995 (ATGSTTNPSSTPGTTPIPPVLTTTATTPAATSSTVTPSSA) the composition is skewed to low complexity. Residues 3996-4043 (LGTTHTPPVPNTTATTHGRSLSPSSPHTVRTAWTSATSGTLGTTHITE) are compositionally biased toward polar residues. N-linked (GlcNAc...) asparagine glycosylation is present at Asn4006. Residues 4044 to 4118 (PSTGTSHTPA…TLLPSSPTSA (75 aa)) are compositionally biased toward low complexity. The stretch at 4111–4143 (LPSSPTSAPITTVVTTGCEPQCAWSEWLDYSYP) is one HAT 3 repeat. A Cys-rich subdomain 7 repeat occupies 4128–4228 (CEPQCAWSEW…RVFCCNYGHC (101 aa)). Trp4134 is a glycosylation site (C-linked (Man) tryptophan). Residues 4233–4879 (ATSSTAMPSS…TLGTAHTPKV (647 aa)) form a 23 X approximate tandem repeats, Ser/Thr-rich region. Low complexity-rich tracts occupy residues 4259–4274 (TTAS…STPG) and 4283–4389 (TSPA…PGTT). 4 disordered regions span residues 4259-4389 (TTAS…PGTT), 4428-4447 (ATTT…PGTT), 4458-4527 (TVTV…AIPS), and 4541-4750 (TTPT…ATSF). N-linked (GlcNAc...) asparagine glycosylation is found at Asn4804, Asn4960, Asn5017, Asn5024, Asn5046, Asn5096, and Asn5111. The region spanning 5073–5261 (CICSMWGGSH…VPDSRKDGCW (189 aa)) is the VWFD 4 domain. 3 disulfide bridges follow: Cys5075-Cys5221, Cys5097-Cys5260, and Cys5121-Cys5132. Asn5215 is a glycosylation site (N-linked (GlcNAc...) asparagine). Residues 5412–5484 (CPCVGPDGFP…NPCCPETVCV (73 aa)) form the VWFC 2 domain. N-linked (GlcNAc...) asparagine glycosylation is found at Asn5486, Asn5526, Asn5565, Asn5566, Asn5602, Asn5612, Asn5663, Asn5677, and Asn5721. One can recognise a VWFC 3 domain in the interval 5521 to 5587 (QLCSYNGTFY…VAGQCCGECV (67 aa)). Cystine bridges form between Cys5653/Cys5705, Cys5672/Cys5719, Cys5681/Cys5735, and Cys5685/Cys5737. The CTCK domain occupies 5653–5742 (CEEDSCQVRI…DECGCTPFCV (90 aa)).

Homomultimer; disulfide-linked. The N- and C-terminus mediate their assembly into higher order structures to form filaments. The CTCK domains of two polypeptides associate in the endoplasmic reticulum to generate intermolecularly disulfide-bonded dimers. These dimers progress to the Golgi apparatus, which is a more acidic environment than the endoplasmic reticulum. Under acidic conditions, the N-termini form non-covalent intermolecular interactions that juxtapose assemblies from different CTCK-linked dimers to produce long, disulfide-linked polymers that remain highly compact until secretion. Post-translationally, highly glycosylated. C-, N- and O-glycosylated. C-mannosylated in the Cys-rich subdomains probably on the first Trp residue of the WXXW motif. Highly O-glycosylated in the Ser/Thr-rich tandem repeat (TR) region. The repeat region is about 59% O-glycosylated with a high abundance of NeuAc(2)Hex(1)HexNac1-ol. In terms of tissue distribution, expressed on surface airway epithelia. Expressed mainly in mucous cells of submucosal glands of airway tissues. Highly expressed in the sublingual gland. Also found in submaxillary glands, endocervix, gall bladder, and pancreas.

The protein localises to the secreted. In terms of biological role, gel-forming mucin that is thought to contribute to the lubricating and viscoelastic properties of whole saliva and cervical mucus. The polypeptide is Mucin-5B (MUC5B) (Homo sapiens (Human)).